The sequence spans 277 residues: Orotidine 5'-phosphate decarboxylase (277 aa).

Lys-93 functions as the Proton donor in the catalytic mechanism.

This sequence belongs to the OMP decarboxylase family. Type 2 subfamily.

It carries out the reaction orotidine 5'-phosphate + H(+) = UMP + CO2. The protein operates within pyrimidine metabolism; UMP biosynthesis via de novo pathway; UMP from orotate: step 2/2. The polypeptide is Orotidine 5'-phosphate decarboxylase (Haloarcula marismortui (strain ATCC 43049 / DSM 3752 / JCM 8966 / VKM B-1809) (Halobacterium marismortui)).